A 207-amino-acid polypeptide reads, in one-letter code: Probable GTP-binding protein EngB (207 aa).

The EngB-type G domain maps to 22–194 (DLPEIAFAGR…WRRIEEVLPA (173 aa)). Residues 30–37 (GRSNVGKS), 57–61 (GRTQL), 75–78 (DLPG), 142–145 (TKCD), and 173–175 (FSA) contribute to the GTP site. Mg(2+) contacts are provided by S37 and T59.

It belongs to the TRAFAC class TrmE-Era-EngA-EngB-Septin-like GTPase superfamily. EngB GTPase family. Mg(2+) is required as a cofactor.

Its function is as follows. Necessary for normal cell division and for the maintenance of normal septation. This Geotalea daltonii (strain DSM 22248 / JCM 15807 / FRC-32) (Geobacter daltonii) protein is Probable GTP-binding protein EngB.